The chain runs to 172 residues: Adenine phosphoribosyltransferase (172 aa).

The protein belongs to the purine/pyrimidine phosphoribosyltransferase family. Homodimer.

The protein resides in the cytoplasm. It catalyses the reaction AMP + diphosphate = 5-phospho-alpha-D-ribose 1-diphosphate + adenine. It participates in purine metabolism; AMP biosynthesis via salvage pathway; AMP from adenine: step 1/1. In terms of biological role, catalyzes a salvage reaction resulting in the formation of AMP, that is energically less costly than de novo synthesis. The sequence is that of Adenine phosphoribosyltransferase from Polynucleobacter asymbioticus (strain DSM 18221 / CIP 109841 / QLW-P1DMWA-1) (Polynucleobacter necessarius subsp. asymbioticus).